A 413-amino-acid polypeptide reads, in one-letter code: Ras association domain-containing protein 5 (413 aa).

The disordered stretch occupies residues M1–P105. Basic and acidic residues predominate over residues A61–H74. The Phorbol-ester/DAG-type zinc-finger motif lies at G117–C165. A phosphoserine mark is found at S177 and S274. The Ras-associating domain occupies P265–T359. The residue at position 347 (T347) is a Phosphothreonine. Residues D361–S408 enclose the SARAH domain.

Interacts directly with activated HRAS; a RASSF5-STK4/MST1 complex probably associates with activated HRAS. Interacts with KRAS. Probably interacts with Ras-like GTPases RRAS, MRAS, RAP1B, RAP2A and RALA. Interacts with RRAS2. Can self-associate. Interacts with RSSF1 isoform A. The RSSF1 isoform A-RSSF5 heterodimer probably mediates the association of RSSF1 with HRAS. Isoform 2 interacts with activated RAP1A and ITGAL/LFA-1. Binds STK4/MST1, inhibiting STK4/MST1 autoactivation.

The protein localises to the cytoplasm. It localises to the cytoskeleton. Functionally, potential tumor suppressor. Seems to be involved in lymphocyte adhesion by linking RAP1A activation upon T-cell receptor or chemokine stimulation to integrin activation. Stimulates lymphocyte polarization and the patch-like distribution of ITGAL/LFA-1, resulting in an enhanced adhesion to ICAM1. Together with RAP1A may participate in regulation of microtubule growth. The association with activated RAP1A is required for directional movement of endothelial cells during wound healing. May be involved in regulation of Ras apoptotic function. The RASSF5-STK4/MST1 complex may mediate HRAS and KRAS induced apoptosis. The protein is Ras association domain-containing protein 5 (Rassf5) of Rattus norvegicus (Rat).